Consider the following 382-residue polypeptide: Dual-specificity RNA methyltransferase RlmN (382 aa).

Glu96 (proton acceptor) is an active-site residue. Residues 102–342 (QGKRGTLCVS…VRTTRGEDID (241 aa)) enclose the Radical SAM core domain. Cys109 and Cys345 are disulfide-bonded. [4Fe-4S] cluster contacts are provided by Cys116, Cys120, and Cys123. S-adenosyl-L-methionine is bound by residues 170-171 (GE), Ser202, 224-226 (SLH), and Asn302. Residue Cys345 is the S-methylcysteine intermediate of the active site.

The protein belongs to the radical SAM superfamily. RlmN family. [4Fe-4S] cluster serves as cofactor.

The protein resides in the cytoplasm. It carries out the reaction adenosine(2503) in 23S rRNA + 2 reduced [2Fe-2S]-[ferredoxin] + 2 S-adenosyl-L-methionine = 2-methyladenosine(2503) in 23S rRNA + 5'-deoxyadenosine + L-methionine + 2 oxidized [2Fe-2S]-[ferredoxin] + S-adenosyl-L-homocysteine. The catalysed reaction is adenosine(37) in tRNA + 2 reduced [2Fe-2S]-[ferredoxin] + 2 S-adenosyl-L-methionine = 2-methyladenosine(37) in tRNA + 5'-deoxyadenosine + L-methionine + 2 oxidized [2Fe-2S]-[ferredoxin] + S-adenosyl-L-homocysteine. Functionally, specifically methylates position 2 of adenine 2503 in 23S rRNA and position 2 of adenine 37 in tRNAs. m2A2503 modification seems to play a crucial role in the proofreading step occurring at the peptidyl transferase center and thus would serve to optimize ribosomal fidelity. The sequence is that of Dual-specificity RNA methyltransferase RlmN from Pseudomonas syringae pv. tomato (strain ATCC BAA-871 / DC3000).